The sequence spans 357 residues: MTQPVQTIDVLLAEHAELELALADPALHSNPAEARRVGRRFARLAPIVATHRKLTSARDDLETARELVASDESFAAEVAALEARVGELDAQLTDMLAPRDPHDADDIVLEVKSGEGGEESALFAADLARMYIRYAERHGWAVTVLDETTSDLGGYKDATLAIASKADTPDGVWSRMKFEGGVHRVQRVPVTESQGRVHTSAAGVLVYPEPEEVGQVQIDESDLRIDVFRSSGKGGQGVNTTDSAVRITHLPTGIVVTCQNERSQLQNKTRALQVLAARLQAMAEEQALADASADRASQIRTVDRSERIRTYNFPENRITDHRIGYKSHNLDQVLDGDLDALFDALSAADKQSRLRQS.

Q236 is subject to N5-methylglutamine.

Belongs to the prokaryotic/mitochondrial release factor family. In terms of processing, methylated by PrmC. Methylation increases the termination efficiency of RF1.

The protein resides in the cytoplasm. Functionally, peptide chain release factor 1 directs the termination of translation in response to the peptide chain termination codons UAG and UAA. In Mycobacterium bovis (strain ATCC BAA-935 / AF2122/97), this protein is Peptide chain release factor 1 (prfA).